The following is a 456-amino-acid chain: Bifunctional protein GlmU (456 aa).

The tract at residues 1 to 229 (MSNRPMSVVI…TTETDGVNNR (229 aa)) is pyrophosphorylase. UDP-N-acetyl-alpha-D-glucosamine-binding positions include 11 to 14 (LAAG), K25, Q76, 81 to 82 (GT), 103 to 105 (YGD), G140, E154, N169, and N227. D105 contacts Mg(2+). A Mg(2+)-binding site is contributed by N227. The tract at residues 230–250 (LQLATLERVYQAEQAEKLLLS) is linker. The tract at residues 251–456 (GVMLQDPARF…ASWQRPQKKK (206 aa)) is N-acetyltransferase. Positions 333 and 351 each coordinate UDP-N-acetyl-alpha-D-glucosamine. H363 serves as the catalytic Proton acceptor. UDP-N-acetyl-alpha-D-glucosamine is bound by residues Y366 and N377. Residues A380, 386-387 (NY), S405, A423, and R440 each bind acetyl-CoA.

In the N-terminal section; belongs to the N-acetylglucosamine-1-phosphate uridyltransferase family. This sequence in the C-terminal section; belongs to the transferase hexapeptide repeat family. In terms of assembly, homotrimer. Mg(2+) serves as cofactor.

The protein resides in the cytoplasm. The enzyme catalyses alpha-D-glucosamine 1-phosphate + acetyl-CoA = N-acetyl-alpha-D-glucosamine 1-phosphate + CoA + H(+). It catalyses the reaction N-acetyl-alpha-D-glucosamine 1-phosphate + UTP + H(+) = UDP-N-acetyl-alpha-D-glucosamine + diphosphate. The protein operates within nucleotide-sugar biosynthesis; UDP-N-acetyl-alpha-D-glucosamine biosynthesis; N-acetyl-alpha-D-glucosamine 1-phosphate from alpha-D-glucosamine 6-phosphate (route II): step 2/2. Its pathway is nucleotide-sugar biosynthesis; UDP-N-acetyl-alpha-D-glucosamine biosynthesis; UDP-N-acetyl-alpha-D-glucosamine from N-acetyl-alpha-D-glucosamine 1-phosphate: step 1/1. It participates in bacterial outer membrane biogenesis; LPS lipid A biosynthesis. In terms of biological role, catalyzes the last two sequential reactions in the de novo biosynthetic pathway for UDP-N-acetylglucosamine (UDP-GlcNAc). The C-terminal domain catalyzes the transfer of acetyl group from acetyl coenzyme A to glucosamine-1-phosphate (GlcN-1-P) to produce N-acetylglucosamine-1-phosphate (GlcNAc-1-P), which is converted into UDP-GlcNAc by the transfer of uridine 5-monophosphate (from uridine 5-triphosphate), a reaction catalyzed by the N-terminal domain. The protein is Bifunctional protein GlmU of Erwinia tasmaniensis (strain DSM 17950 / CFBP 7177 / CIP 109463 / NCPPB 4357 / Et1/99).